Consider the following 121-residue polypeptide: UPF0344 protein BCE_1257 (121 aa).

A run of 4 helical transmembrane segments spans residues 6-26 (ITAW…YSAG), 38-58 (LMYI…VKTA), 65-85 (WYGL…MVLV), and 92-112 (PTGA…YLGL).

The protein belongs to the UPF0344 family.

It is found in the cell membrane. The protein is UPF0344 protein BCE_1257 of Bacillus cereus (strain ATCC 10987 / NRS 248).